A 179-amino-acid polypeptide reads, in one-letter code: MYEFLDRRYALALYEVGEKNQKLEEYINDFGEIVHLLKNDENINQVVNHPQISTSEKKKIFMEIFKGKIDEKLLNFLLLLLEKKRIHDAEGILTQLNKISLEKHNKVVAEVRTVIPLTDNEKTTLASKLSAKYNKIIIFKEIIDKTIIGGVYVRVGDDVIDGTIKFKLESMKKVMLKEE.

The protein belongs to the ATPase delta chain family. In terms of assembly, F-type ATPases have 2 components, F(1) - the catalytic core - and F(0) - the membrane proton channel. F(1) has five subunits: alpha(3), beta(3), gamma(1), delta(1), epsilon(1). F(0) has three main subunits: a(1), b(2) and c(10-14). The alpha and beta chains form an alternating ring which encloses part of the gamma chain. F(1) is attached to F(0) by a central stalk formed by the gamma and epsilon chains, while a peripheral stalk is formed by the delta and b chains.

It localises to the cell membrane. In terms of biological role, f(1)F(0) ATP synthase produces ATP from ADP in the presence of a proton or sodium gradient. F-type ATPases consist of two structural domains, F(1) containing the extramembraneous catalytic core and F(0) containing the membrane proton channel, linked together by a central stalk and a peripheral stalk. During catalysis, ATP synthesis in the catalytic domain of F(1) is coupled via a rotary mechanism of the central stalk subunits to proton translocation. Functionally, this protein is part of the stalk that links CF(0) to CF(1). It either transmits conformational changes from CF(0) to CF(1) or is implicated in proton conduction. In Clostridium acetobutylicum (strain ATCC 824 / DSM 792 / JCM 1419 / IAM 19013 / LMG 5710 / NBRC 13948 / NRRL B-527 / VKM B-1787 / 2291 / W), this protein is ATP synthase subunit delta.